The following is a 545-amino-acid chain: CTP synthase (545 aa).

The tract at residues 1 to 266 is amidoligase domain; sequence MTHFIFVTGG…DDLICERFGY (266 aa). Ser13 is a CTP binding site. Position 13 (Ser13) interacts with UTP. ATP contacts are provided by residues 14–19 and Asp71; that span reads SLGKGI. Residues Asp71 and Glu140 each contribute to the Mg(2+) site. CTP-binding positions include 147–149, 187–192, and Lys223; these read DIE and KTKPTQ. UTP contacts are provided by residues 187-192 and Lys223; that span reads KTKPTQ. 239–241 lines the ATP pocket; sequence KDA. A Glutamine amidotransferase type-1 domain is found at 292–543; it reads RVAMVGKYVE…IDAAKKQHLK (252 aa). Gly353 lines the L-glutamine pocket. Cys380 functions as the Nucleophile; for glutamine hydrolysis in the catalytic mechanism. Residues 381 to 384, Glu404, and Arg471 contribute to the L-glutamine site; that span reads LGMQ. Residues His516 and Glu518 contribute to the active site.

This sequence belongs to the CTP synthase family. As to quaternary structure, homotetramer.

It carries out the reaction UTP + L-glutamine + ATP + H2O = CTP + L-glutamate + ADP + phosphate + 2 H(+). The enzyme catalyses L-glutamine + H2O = L-glutamate + NH4(+). It catalyses the reaction UTP + NH4(+) + ATP = CTP + ADP + phosphate + 2 H(+). It participates in pyrimidine metabolism; CTP biosynthesis via de novo pathway; CTP from UDP: step 2/2. Its activity is regulated as follows. Allosterically activated by GTP, when glutamine is the substrate; GTP has no effect on the reaction when ammonia is the substrate. The allosteric effector GTP functions by stabilizing the protein conformation that binds the tetrahedral intermediate(s) formed during glutamine hydrolysis. Inhibited by the product CTP, via allosteric rather than competitive inhibition. In terms of biological role, catalyzes the ATP-dependent amination of UTP to CTP with either L-glutamine or ammonia as the source of nitrogen. Regulates intracellular CTP levels through interactions with the four ribonucleotide triphosphates. This chain is CTP synthase, found in Acinetobacter baylyi (strain ATCC 33305 / BD413 / ADP1).